Here is a 94-residue protein sequence, read N- to C-terminus: MEITDVRIRKIDSEGKMKAVVSVTFDNEFVVHDIKVIESQNGLFIAMPSRKAPDGEFRDIAHPINAETRSKIQTAILDKYESICAGSTETEGNN.

This sequence belongs to the SpoVG family.

Its function is as follows. Could be involved in septation. The protein is Putative septation protein SpoVG of Acetivibrio thermocellus (strain ATCC 27405 / DSM 1237 / JCM 9322 / NBRC 103400 / NCIMB 10682 / NRRL B-4536 / VPI 7372) (Clostridium thermocellum).